Consider the following 141-residue polypeptide: Hemoglobin subunit alpha (141 aa).

The 141-residue stretch at V1–R141 folds into the Globin domain. S3 carries the phosphoserine modification. K7 bears the N6-succinyllysine mark. The residue at position 8 (T8) is a Phosphothreonine. K11 carries the post-translational modification N6-succinyllysine. Y24 carries the phosphotyrosine modification. The residue at position 35 (S35) is a Phosphoserine. Residue K40 is modified to N6-succinyllysine. Position 49 is a phosphoserine (S49). H58 is an O2 binding site. A heme b-binding site is contributed by H87. S102 is modified (phosphoserine). At T108 the chain carries Phosphothreonine. S124 carries the post-translational modification Phosphoserine. T134 and T137 each carry phosphothreonine. Phosphoserine is present on S138.

Belongs to the globin family. As to quaternary structure, heterotetramer of two alpha chains and two beta chains. Red blood cells.

Functionally, involved in oxygen transport from the lung to the various peripheral tissues. Its function is as follows. Hemopressin acts as an antagonist peptide of the cannabinoid receptor CNR1. Hemopressin-binding efficiently blocks cannabinoid receptor CNR1 and subsequent signaling. The sequence is that of Hemoglobin subunit alpha (HBA) from Rhinoceros unicornis (Greater Indian rhinoceros).